The chain runs to 922 residues: Periodic tryptophan protein 2 homolog (922 aa).

14 WD repeats span residues 12 to 52, 53 to 92, 94 to 132, 141 to 180, 182 to 221, 271 to 310, 313 to 353, 356 to 395, 398 to 439, 443 to 485, 486 to 525, 528 to 567, 590 to 629, and 691 to 731; these read GTVY…TLPI, QSKY…VLGE, KFFK…KQPN, THKS…VSYF, VKGS…EMEQ, GVKC…QLYK, ISSH…YILK, GHSY…CYIT, EHEG…NFRT, PNKT…DILS, GHQS…EIRE, QHTS…QIGL, SAGR…LIKK, and KKKQ…DPTD. Positions 893 to 922 are disordered; that stretch reads ESKKNKEQEEDQFSDDEETVYQNNKKNKNK. Over residues 900 to 911 the composition is skewed to acidic residues; it reads QEEDQFSDDEET.

Belongs to the WD repeat PWP2 family. As to quaternary structure, part of the small subunit (SSU) processome, composed of more than 70 proteins and the RNA chaperone small nucleolar RNA (snoRNA) U3.

The protein resides in the nucleus. The protein localises to the nucleolus. Functionally, part of the small subunit (SSU) processome, first precursor of the small eukaryotic ribosomal subunit. During the assembly of the SSU processome in the nucleolus, many ribosome biogenesis factors, an RNA chaperone and ribosomal proteins associate with the nascent pre-rRNA and work in concert to generate RNA folding, modifications, rearrangements and cleavage as well as targeted degradation of pre-ribosomal RNA by the RNA exosome. This is Periodic tryptophan protein 2 homolog (pwp2) from Dictyostelium discoideum (Social amoeba).